The following is a 355-amino-acid chain: Apyrase apy-1 (355 aa).

Residues 1 to 6 lie on the Cytoplasmic side of the membrane; the sequence is MTQESN. The helical; Signal-anchor for type II membrane protein transmembrane segment at 7 to 29 threads the bilayer; that stretch reads SNFFNFLLFGFVTAIAFYSGTQF. Asparagine 30 is a glycosylation site (N-linked (GlcNAc...) asparagine). Over 30–355 the chain is Lumenal; that stretch reads NKSSEQEEHI…PYKYEGIAFA (326 aa). Ca(2+) is bound by residues serine 119, glutamate 166, and glutamate 235. N-linked (GlcNAc...) asparagine glycosylation occurs at asparagine 291. A Ca(2+)-binding site is contributed by glutamate 350.

This sequence belongs to the apyrase family. The cofactor is Ca(2+).

The protein resides in the endomembrane system. It carries out the reaction a ribonucleoside 5'-diphosphate + H2O = a ribonucleoside 5'-phosphate + phosphate + H(+). In terms of biological role, hydrolyzes UDP and to a lesser extent GDP. By preventing the accumulation of NDP, may promote the reglucosylation of incompletely folded glycoproteins in the endoplasmic reticulum following the unfolded protein response. In Caenorhabditis elegans, this protein is Apyrase apy-1.